The sequence spans 109 residues: ALVMTQTPSPVSAAVGGTVTISCQASQSVYSNNLSWFQQKPGQPPKLLIYKASTLASGVPSRFKGSGSGTQFTLPISGVECDDAATYYCQGTNTGNNIVFGTGTEVVVK.

The segment at 1 to 23 (ALVMTQTPSPVSAAVGGTVTISC) is framework-1. Residues 24–35 (QASQSVYSNNLS) are complementarity-determining-1. Residues 36-50 (WFQQKPGQPPKLLIY) are framework-2. The complementarity-determining-2 stretch occupies residues 51–57 (KASTLAS). A framework-3 region spans residues 58 to 89 (GVPSRFKGSGSGTQFTLPISGVECDDAATYYC). The complementarity-determining-3 stretch occupies residues 90 to 99 (QGTNTGNNIV). Residues 100-109 (FGTGTEVVVK) form a framework-4 region.

This chain is Ig kappa chain V region K16-167, found in Oryctolagus cuniculus (Rabbit).